Reading from the N-terminus, the 497-residue chain is Probable cytosol aminopeptidase (497 aa).

Mn(2+) contacts are provided by lysine 267 and aspartate 272. Residue lysine 279 is part of the active site. 3 residues coordinate Mn(2+): aspartate 290, aspartate 349, and glutamate 351. Arginine 353 is a catalytic residue.

It belongs to the peptidase M17 family. The cofactor is Mn(2+).

Its subcellular location is the cytoplasm. It carries out the reaction Release of an N-terminal amino acid, Xaa-|-Yaa-, in which Xaa is preferably Leu, but may be other amino acids including Pro although not Arg or Lys, and Yaa may be Pro. Amino acid amides and methyl esters are also readily hydrolyzed, but rates on arylamides are exceedingly low.. The catalysed reaction is Release of an N-terminal amino acid, preferentially leucine, but not glutamic or aspartic acids.. Functionally, presumably involved in the processing and regular turnover of intracellular proteins. Catalyzes the removal of unsubstituted N-terminal amino acids from various peptides. The protein is Probable cytosol aminopeptidase of Syntrophotalea carbinolica (strain DSM 2380 / NBRC 103641 / GraBd1) (Pelobacter carbinolicus).